A 436-amino-acid polypeptide reads, in one-letter code: 3-ketoacyl-CoA thiolase (436 aa).

C99 acts as the Acyl-thioester intermediate in catalysis. Catalysis depends on proton acceptor residues H392 and C422.

This sequence belongs to the thiolase-like superfamily. Thiolase family. Heterotetramer of two alpha chains (FadJ) and two beta chains (FadI).

It is found in the cytoplasm. It carries out the reaction an acyl-CoA + acetyl-CoA = a 3-oxoacyl-CoA + CoA. It functions in the pathway lipid metabolism; fatty acid beta-oxidation. Its function is as follows. Catalyzes the final step of fatty acid oxidation in which acetyl-CoA is released and the CoA ester of a fatty acid two carbons shorter is formed. The chain is 3-ketoacyl-CoA thiolase from Pseudoalteromonas translucida (strain TAC 125).